A 126-amino-acid chain; its full sequence is Acidic phospholipase A2 S1E6-b (126 aa).

A signal peptide spans 1 to 3 (VEG). 7 cysteine pairs are disulfide-bonded: Cys-29-Cys-119, Cys-31-Cys-47, Cys-46-Cys-98, Cys-52-Cys-126, Cys-53-Cys-91, Cys-60-Cys-84, and Cys-78-Cys-89. Tyr-30, Gly-32, and Gly-34 together coordinate Ca(2+). His-50 is an active-site residue. Asp-51 is a binding site for Ca(2+). Residue Asp-92 is part of the active site.

In terms of assembly, homodimer. Requires Ca(2+) as cofactor. As to expression, expressed by the venom gland.

The protein localises to the secreted. It catalyses the reaction a 1,2-diacyl-sn-glycero-3-phosphocholine + H2O = a 1-acyl-sn-glycero-3-phosphocholine + a fatty acid + H(+). Snake venom phospholipase that inhibits ADP-induced platelet aggregation. PLA2 catalyzes the calcium-dependent hydrolysis of the 2-acyl groups in 3-sn-phosphoglycerides. This Calloselasma rhodostoma (Malayan pit viper) protein is Acidic phospholipase A2 S1E6-b.